Consider the following 828-residue polypeptide: Conserved oligomeric Golgi complex subunit 3 (828 aa).

Alanine 2 is modified (N-acetylalanine). The disordered stretch occupies residues 504 to 543 (DEQKKVPSEASFSDVHLEEGESNSLTKSGSTESLNPRPQT). A compositionally biased stretch (polar residues) spans 525 to 543 (SNSLTKSGSTESLNPRPQT). Serine 663 bears the Phosphoserine mark.

This sequence belongs to the COG3 family. In terms of assembly, component of the conserved oligomeric Golgi complex which is composed of eight different subunits and is required for normal Golgi morphology and localization. Interacts with TMEM115. As to expression, widely expressed with highest levels in pancreas and testis and lowest levels in lung.

It is found in the golgi apparatus. The protein resides in the golgi stack membrane. Functionally, involved in ER-Golgi transport. Also involved in retrograde (Golgi to ER) transport. In Homo sapiens (Human), this protein is Conserved oligomeric Golgi complex subunit 3 (COG3).